The primary structure comprises 288 residues: Pantothenate synthetase (288 aa).

27-34 (MGALHEGH) provides a ligand contact to ATP. Catalysis depends on H34, which acts as the Proton donor. Residues Q58 and Q150 each contribute to the (R)-pantoate site. Q58 serves as a coordination point for beta-alanine. Residues L173 and 181–184 (YSSR) contribute to the ATP site.

Belongs to the pantothenate synthetase family. Homodimer.

It localises to the cytoplasm. It carries out the reaction (R)-pantoate + beta-alanine + ATP = (R)-pantothenate + AMP + diphosphate + H(+). It functions in the pathway cofactor biosynthesis; (R)-pantothenate biosynthesis; (R)-pantothenate from (R)-pantoate and beta-alanine: step 1/1. Its function is as follows. Catalyzes the condensation of pantoate with beta-alanine in an ATP-dependent reaction via a pantoyl-adenylate intermediate. This Tropheryma whipplei (strain TW08/27) (Whipple's bacillus) protein is Pantothenate synthetase.